The primary structure comprises 147 residues: UPF0178 protein VP2328 (147 aa).

Belongs to the UPF0178 family.

In Vibrio parahaemolyticus serotype O3:K6 (strain RIMD 2210633), this protein is UPF0178 protein VP2328.